The sequence spans 179 residues: tRNA-splicing endonuclease (179 aa).

Residues Tyr-115, His-123, and Lys-154 contribute to the active site.

This sequence belongs to the tRNA-intron endonuclease family. Archaeal short subfamily. Homotetramer; although the tetramer contains four active sites, only two participate in the cleavage. Therefore, it should be considered as a dimer of dimers.

It carries out the reaction pretRNA = a 3'-half-tRNA molecule with a 5'-OH end + a 5'-half-tRNA molecule with a 2',3'-cyclic phosphate end + an intron with a 2',3'-cyclic phosphate and a 5'-hydroxyl terminus.. Endonuclease that removes tRNA introns. Cleaves pre-tRNA at the 5'- and 3'-splice sites to release the intron. The products are an intron and two tRNA half-molecules bearing 2',3' cyclic phosphate and 5'-OH termini. Recognizes a pseudosymmetric substrate in which 2 bulged loops of 3 bases are separated by a stem of 4 bp. The sequence is that of tRNA-splicing endonuclease from Methanopyrus kandleri (strain AV19 / DSM 6324 / JCM 9639 / NBRC 100938).